A 257-amino-acid chain; its full sequence is Tryptophan synthase alpha chain (257 aa).

Active-site proton acceptor residues include Glu44 and Asp55.

The protein belongs to the TrpA family. As to quaternary structure, tetramer of two alpha and two beta chains.

It catalyses the reaction (1S,2R)-1-C-(indol-3-yl)glycerol 3-phosphate + L-serine = D-glyceraldehyde 3-phosphate + L-tryptophan + H2O. The protein operates within amino-acid biosynthesis; L-tryptophan biosynthesis; L-tryptophan from chorismate: step 5/5. In terms of biological role, the alpha subunit is responsible for the aldol cleavage of indoleglycerol phosphate to indole and glyceraldehyde 3-phosphate. The polypeptide is Tryptophan synthase alpha chain (Chlamydia felis (strain Fe/C-56) (Chlamydophila felis)).